The primary structure comprises 346 residues: MNLHGKSVILHDMSLRDGMHAKRHQISLEQMVAVATGLDQAGMPLIEITHGDGLGGRSINYGFPAHSDEEYLRAVIPQLKQAKVSALLLPGIGTVDHLKMALDCGVSTIRVATHCTEADVSEQHIGMARKLGVDTVGFLMMAHMISAEKVLEQAKLMESYGANCIYCTDSAGYMLPDEVSEKIGLLRAELNPATEVGFHGHHNMGMAIANSLAAIEAGAARIDGSVAGLGAGAGNTPLEVFVAVCKRMGVETGIDLYKIMDVAEDLVVPMMDQPIRVDRDALTLGYAGVYSSFLLFAQRAEKKYGVSARDILVELGRRGTVGGQEDMIEDLALDMARARQQQKVSA.

The Pyruvate carboxyltransferase domain occupies 8 to 260 (VILHDMSLRD…ETGIDLYKIM (253 aa)). Residue 16–17 (RD) participates in substrate binding. Asp-17 is a Mn(2+) binding site. His-20 acts as the Proton acceptor in catalysis. Substrate is bound by residues Ser-170 and His-199. The Mn(2+) site is built by His-199 and His-201. Tyr-290 lines the substrate pocket.

Belongs to the 4-hydroxy-2-oxovalerate aldolase family.

The catalysed reaction is (S)-4-hydroxy-2-oxopentanoate = acetaldehyde + pyruvate. It participates in aromatic compound metabolism; naphthalene degradation. The polypeptide is 4-hydroxy-2-oxovalerate aldolase (nahM) (Pseudomonas putida (Arthrobacter siderocapsulatus)).